Here is a 449-residue protein sequence, read N- to C-terminus: UDP-N-acetylglucosamine 1-carboxyvinyltransferase (449 aa).

A phosphoenolpyruvate-binding site is contributed by 51-52 (KN). Arginine 121 contributes to the UDP-N-acetyl-alpha-D-glucosamine binding site. The active-site Proton donor is the cysteine 145. Cysteine 145 bears the 2-(S-cysteinyl)pyruvic acid O-phosphothioketal mark. UDP-N-acetyl-alpha-D-glucosamine contacts are provided by residues 150–154 (RPVDQ), aspartate 333, and isoleucine 355.

The protein belongs to the EPSP synthase family. MurA subfamily.

Its subcellular location is the cytoplasm. It carries out the reaction phosphoenolpyruvate + UDP-N-acetyl-alpha-D-glucosamine = UDP-N-acetyl-3-O-(1-carboxyvinyl)-alpha-D-glucosamine + phosphate. The protein operates within cell wall biogenesis; peptidoglycan biosynthesis. Cell wall formation. Adds enolpyruvyl to UDP-N-acetylglucosamine. The polypeptide is UDP-N-acetylglucosamine 1-carboxyvinyltransferase (Burkholderia lata (strain ATCC 17760 / DSM 23089 / LMG 22485 / NCIMB 9086 / R18194 / 383)).